Reading from the N-terminus, the 362-residue chain is Cyclic di-GMP phosphodiesterase PdeL (362 aa).

The region spanning 18-83 (HLSLPGSVSE…TFWRDIFFQY (66 aa)) is the HTH luxR-type domain. The segment at residues 42 to 61 (VTEISQYRNRSAKTISHQKK) is a DNA-binding region (H-T-H motif). An EAL domain is found at 106–360 (HIVTPEAISL…KFISEWVMKA (255 aa)). Gln-127 provides a ligand contact to substrate. Residue Glu-141 participates in Mg(2+) binding. Substrate-binding positions include 144-145 (VR) and Asn-200. Residues Asn-200, Glu-232, and Asp-262 each contribute to the Mg(2+) site. Substrate is bound by residues Asp-262, Lys-286, 319–322 (EGVE), and Tyr-341.

As to quaternary structure, is in a fast thermodynamic monomer-homodimer equilibrium. Dimerization is required for PDE activity. Dimerization affinity is increased about 100-fold upon substrate binding. It depends on Mg(2+) as a cofactor. The cofactor is Mn(2+).

The enzyme catalyses 3',3'-c-di-GMP + H2O = 5'-phosphoguanylyl(3'-&gt;5')guanosine + H(+). With respect to regulation, strongly inhibited by Ca(2+). Functionally, acts both as an enzyme and as a c-di-GMP sensor to couple transcriptional activity to the c-di-GMP status of the cell. Phosphodiesterase (PDE) that catalyzes the hydrolysis of cyclic-di-GMP (c-di-GMP) to 5'-pGpG. Also acts as a transcription factor to control its own expression. This chain is Cyclic di-GMP phosphodiesterase PdeL, found in Escherichia coli (strain K12).